Consider the following 310-residue polypeptide: Cytosolic Fe-S cluster assembly factor Nubp1 homolog (310 aa).

Residues Cys-9, Cys-23, Cys-26, and Cys-32 each contribute to the [4Fe-4S] cluster site. ATP is bound at residue 63 to 70; the sequence is GKGGVGKS. [4Fe-4S] cluster-binding residues include Cys-240 and Cys-243.

Belongs to the Mrp/NBP35 ATP-binding proteins family. NUBP1/NBP35 subfamily. Heterotetramer of 2 Nubp1 and 2 Nubp2 chains. The cofactor is [4Fe-4S] cluster.

It is found in the cytoplasm. Its function is as follows. Component of the cytosolic iron-sulfur (Fe/S) protein assembly (CIA) machinery. Required for maturation of extramitochondrial Fe-S proteins. The Nubp1-Nubp2 heterotetramer forms a Fe-S scaffold complex, mediating the de novo assembly of an Fe-S cluster and its transfer to target apoproteins. This chain is Cytosolic Fe-S cluster assembly factor Nubp1 homolog, found in Drosophila mojavensis (Fruit fly).